Reading from the N-terminus, the 219-residue chain is Large ribosomal subunit protein uL3 (219 aa).

The disordered stretch occupies residues 134 to 153 (RASHGNSRSHNVPGSIGMAQ). The residue at position 153 (Gln153) is an N5-methylglutamine.

This sequence belongs to the universal ribosomal protein uL3 family. In terms of assembly, part of the 50S ribosomal subunit. Forms a cluster with proteins L14 and L19. Methylated by PrmB.

Functionally, one of the primary rRNA binding proteins, it binds directly near the 3'-end of the 23S rRNA, where it nucleates assembly of the 50S subunit. The sequence is that of Large ribosomal subunit protein uL3 from Paraburkholderia phytofirmans (strain DSM 17436 / LMG 22146 / PsJN) (Burkholderia phytofirmans).